Reading from the N-terminus, the 361-residue chain is MAPPNKFRINAKNYFLTYPHCSLTKEEALSQIKTLETPVNKLFIRICRELHEDGSPHLHVLIQFEGKFQCKNQRFFDLTSPHRSAHFHPNIQGAKSSTDVKSYMEKDGDVLDHGVFQIDGRSARGGCQSANDAYAEAINSGSKASALNILREKAPKDFVLQFHNLNSNLDRIFTPPIVEYISPFSSSSFDQVPEELDEWAVDNVVSAAARPLRPVSIVIEGDSRTGKTMWARSLGPHNYLCGHLDLSPKVYSNDAWFNVIDDVDPHYLKHFKEFMGAQRDWQSNTKYGKPVQIKGGIPTIFLCNPGPNSSYKEYLEEEKNSALRNWAVKNAIFVSLNGPLYSGSYQGATPNRQEDNQTTTG.

Residues 8 to 116 (RINAKNYFLT…DGDVLDHGVF (109 aa)) form the CRESS-DNA virus Rep endonuclease domain. Positions 15 to 18 (FLTY) match the RCR-1 motif. Positions 49, 57, and 59 each coordinate a divalent metal cation. The RCR-2 signature appears at 57–59 (HLH). Catalysis depends on Tyr-103, which acts as the For DNA cleavage activity. Residues 103–106 (YMEK) carry the RCR-3 motif. A divalent metal cation is bound at residue Asp-107. Positions 143 to 153 (KASALNILREK) are binding to RBR1. Residues 156 to 176 (KDFVLQFHNLNSNLDRIFTPP) are oligomerization. 221 to 228 (GDSRTGKT) contacts ATP.

The protein belongs to the geminiviridae Rep protein family. As to quaternary structure, homooligomer. Interacts with the replication enhancer protein (REn). Interacts with host retinoblastoma-related protein 1 (RBR1), and may thereby induce the transcription of host replicative enzymes even if the cell is not dividing anymore. Interacts with host PCNA. Interacts with host SCE1 protein. Mg(2+) serves as cofactor. Mn(2+) is required as a cofactor.

The protein localises to the host nucleus. Its function is as follows. Essential for the replication of viral ssDNA. The closed circular ssDNA genome is first converted to a superhelical dsDNA. Rep binds a specific region at the genome origin of replication. It introduces an endonucleolytic nick within the conserved sequence 5'-TAATATTAC-3' in the intergenic region of the genome present in all geminiviruses, thereby initiating the rolling circle replication (RCR). Following cleavage, binds covalently to the 5'-phosphate of DNA as a tyrosyl ester. The cleavage gives rise to a free 3'-OH that serves as a primer for the cellular DNA polymerase. The polymerase synthesizes the (+) strand DNA by rolling circle mechanism. After one round of replication, a Rep-catalyzed nucleotidyl transfer reaction releases a circular single-stranded virus genome, thereby terminating the replication. Displays origin-specific DNA cleavage, nucleotidyl transferase, ATPase and helicase activities. This chain is Replication-associated protein, found in Tomato yellow leaf curl China virus (TYLCCNV).